We begin with the raw amino-acid sequence, 198 residues long: Pyridoxal 5'-phosphate synthase subunit PdxT (198 aa).

Gly-52–Ser-54 contributes to the L-glutamine binding site. Residue Cys-84 is the Nucleophile of the active site. L-glutamine-binding positions include Arg-115 and Ile-143 to Arg-144. Residues His-179 and Glu-181 each act as charge relay system in the active site.

The protein belongs to the glutaminase PdxT/SNO family. In the presence of PdxS, forms a dodecamer of heterodimers. Only shows activity in the heterodimer.

It carries out the reaction aldehydo-D-ribose 5-phosphate + D-glyceraldehyde 3-phosphate + L-glutamine = pyridoxal 5'-phosphate + L-glutamate + phosphate + 3 H2O + H(+). The catalysed reaction is L-glutamine + H2O = L-glutamate + NH4(+). It participates in cofactor biosynthesis; pyridoxal 5'-phosphate biosynthesis. Catalyzes the hydrolysis of glutamine to glutamate and ammonia as part of the biosynthesis of pyridoxal 5'-phosphate. The resulting ammonia molecule is channeled to the active site of PdxS. In Methanococcoides burtonii (strain DSM 6242 / NBRC 107633 / OCM 468 / ACE-M), this protein is Pyridoxal 5'-phosphate synthase subunit PdxT.